The following is a 142-amino-acid chain: Cell division protein SepF (142 aa).

Residues 21-31 (ETTTVEEEREE) are compositionally biased toward acidic residues. Residues 21-46 (ETTTVEEEREEQESSHKRQPAISRTN) are disordered.

This sequence belongs to the SepF family. Homodimer. Interacts with FtsZ.

It localises to the cytoplasm. Functionally, cell division protein that is part of the divisome complex and is recruited early to the Z-ring. Probably stimulates Z-ring formation, perhaps through the cross-linking of FtsZ protofilaments. Its function overlaps with FtsA. The protein is Cell division protein SepF of Brevibacillus brevis (strain 47 / JCM 6285 / NBRC 100599).